A 561-amino-acid chain; its full sequence is Glutamate--tRNA ligase (561 aa).

Residues 107-117 (PNPSGPLHLGH) carry the 'HIGH' region motif.

This sequence belongs to the class-I aminoacyl-tRNA synthetase family. Glutamate--tRNA ligase type 2 subfamily.

The protein resides in the cytoplasm. The catalysed reaction is tRNA(Glu) + L-glutamate + ATP = L-glutamyl-tRNA(Glu) + AMP + diphosphate. Catalyzes the attachment of glutamate to tRNA(Glu) in a two-step reaction: glutamate is first activated by ATP to form Glu-AMP and then transferred to the acceptor end of tRNA(Glu). The polypeptide is Glutamate--tRNA ligase (Methanoculleus marisnigri (strain ATCC 35101 / DSM 1498 / JR1)).